Here is a 124-residue protein sequence, read N- to C-terminus: Suppressor of RNA silencing (124 aa).

The segment at 1–14 is basic motif (BM); sequence MPKSEFFREERKRR. Residues 30 to 68 are C-2; sequence CGYSCGMPPAVEKVSVPADTEEDVYMLIFPYEQFCGEKH. Residues 72–124 adopt a coiled-coil conformation; that stretch reads YESLKDVSDDELKLRRLERQRETLLASFQQKLKRYDEKIALLSEKFKNLRSKL. The residue at position 79 (serine 79) is a Phosphoserine.

Belongs to the virgaviridae suppressor of RNA silencing family. In terms of assembly, homooligomer. Post-translationally, phosphorylated at Ser-79 by a host PKA-like kinase; the phosphorylation at this site seems to suppress host cell death.

It localises to the host chloroplast envelope. The protein resides in the host endoplasmic reticulum. It is found in the host cell junction. The protein localises to the host plasmodesma. In terms of biological role, suppressor of RNA-mediated gene silencing, also known as post-transcriptional gene silencing (PTGS), a mechanism of plant viral defense that limits the accumulation of viral RNAs. Promotes viral cell-to-cell long distance movement. The protein is Suppressor of RNA silencing of Peanut clump virus (isolate 87/TGTA2) (PCV).